The primary structure comprises 127 residues: Protein ApaG (127 aa).

Residues 3–127 (NERKYSIKVE…FILSVPRVLH (125 aa)) form the ApaG domain.

This is Protein ApaG from Nitrosomonas europaea (strain ATCC 19718 / CIP 103999 / KCTC 2705 / NBRC 14298).